Here is a 304-residue protein sequence, read N- to C-terminus: GTPase Era (304 aa).

The Era-type G domain occupies 11–179 (YCGFIAIVGR…QKIVRKSLRE (169 aa)). The G1 stretch occupies residues 19–26 (GRPNVGKS). 19-26 (GRPNVGKS) contributes to the GTP binding site. Positions 45–49 (QTTRH) are G2. Residues 66 to 69 (DTPG) are G3. Residues 66–70 (DTPGL) and 128–131 (NKVD) each bind GTP. A G4 region spans residues 128-131 (NKVD). A G5 region spans residues 158-160 (ISA). The region spanning 210 to 287 (TGEELPYSVT…HLELWVKVKA (78 aa)) is the KH type-2 domain.

The protein belongs to the TRAFAC class TrmE-Era-EngA-EngB-Septin-like GTPase superfamily. Era GTPase family. Monomer.

It localises to the cytoplasm. Its subcellular location is the cell inner membrane. An essential GTPase that binds both GDP and GTP, with rapid nucleotide exchange. Plays a role in 16S rRNA processing and 30S ribosomal subunit biogenesis and possibly also in cell cycle regulation and energy metabolism. The polypeptide is GTPase Era (Haemophilus ducreyi (strain 35000HP / ATCC 700724)).